The sequence spans 97 residues: Integration host factor subunit beta (97 aa).

The protein belongs to the bacterial histone-like protein family. Heterodimer of an alpha and a beta chain.

Functionally, this protein is one of the two subunits of integration host factor, a specific DNA-binding protein that functions in genetic recombination as well as in transcriptional and translational control. The chain is Integration host factor subunit beta from Buchnera aphidicola subsp. Cinara cedri (strain Cc).